Consider the following 502-residue polypeptide: 9-beta-pimara-7,15-diene oxidase (502 aa).

Transmembrane regions (helical) follow at residues 4–26 (INSE…ALLT) and 106–128 (LLVS…GAYW). Cys-438 contributes to the heme binding site.

It belongs to the cytochrome P450 family. Heme serves as cofactor.

It localises to the membrane. It carries out the reaction 9beta-pimara-7,15-diene + 3 reduced [NADPH--hemoprotein reductase] + 3 O2 = 9beta-pimara-7,15-dien-19-oate + 3 oxidized [NADPH--hemoprotein reductase] + 4 H2O + 4 H(+). Involved in momilactone phytoalexins biosynthesis; acts as a multifunctional diterpene oxidase. Participates in the biosynthetic steps between 9-beta-pimara-7,15-diene and 3-beta-hydroxy-9-beta-pimara-7,15-dien-19,6-beta-olide. Also catalyzes consecutive oxidations at C19 of syn-stemod-13(17)-ene. In Oryza sativa subsp. japonica (Rice), this protein is 9-beta-pimara-7,15-diene oxidase (CYP99A3).